Reading from the N-terminus, the 317-residue chain is Aspartate carbamoyltransferase catalytic subunit (317 aa).

Carbamoyl phosphate contacts are provided by R64 and T65. K92 is an L-aspartate binding site. R114, H142, and Q145 together coordinate carbamoyl phosphate. Residues R176 and R230 each coordinate L-aspartate. Residues G271 and P272 each contribute to the carbamoyl phosphate site.

Belongs to the aspartate/ornithine carbamoyltransferase superfamily. ATCase family. As to quaternary structure, heterododecamer (2C3:3R2) of six catalytic PyrB chains organized as two trimers (C3), and six regulatory PyrI chains organized as three dimers (R2).

It carries out the reaction carbamoyl phosphate + L-aspartate = N-carbamoyl-L-aspartate + phosphate + H(+). The protein operates within pyrimidine metabolism; UMP biosynthesis via de novo pathway; (S)-dihydroorotate from bicarbonate: step 2/3. Its function is as follows. Catalyzes the condensation of carbamoyl phosphate and aspartate to form carbamoyl aspartate and inorganic phosphate, the committed step in the de novo pyrimidine nucleotide biosynthesis pathway. This is Aspartate carbamoyltransferase catalytic subunit from Nitratidesulfovibrio vulgaris (strain ATCC 29579 / DSM 644 / CCUG 34227 / NCIMB 8303 / VKM B-1760 / Hildenborough) (Desulfovibrio vulgaris).